The sequence spans 77 residues: U11-lycotoxin-Ls1a (77 aa).

The first 20 residues, 1–20 (MKLIILTGLVLFAIVSLIEA), serve as a signal peptide directing secretion. Positions 21–26 (EEESGR) are excised as a propeptide.

This sequence belongs to the neurotoxin 19 (CSTX) family. 10 (U11-Lctx) subfamily. In terms of processing, contains 4 disulfide bonds. In terms of tissue distribution, expressed by the venom gland.

It is found in the secreted. The sequence is that of U11-lycotoxin-Ls1a from Lycosa singoriensis (Wolf spider).